Here is a 309-residue protein sequence, read N- to C-terminus: MVAQYIGRFSPSPTGPLHAGSLVAALASWLDARAHAGQWLVRIEDVDTPRCVAGMDRVILQQLAACGLHADQPPVWQSQRTGLYQQALDQLVVQGLAYPCACSRKDIETALSRLGQARARHGELVYPGTCRTGLHGRVGRAWRLRTDLFKQNKPLATVEYTQEATNLIACNIIHWTDRRLGAQQQDVPAQVGDFVLKRFDGCFTYQLAVVVDDAAQGITDVVRGEDLADNTARQILLQQYLGLPTPRYLHTPLVLGAHGEKLSKQNGAQALDTTEPLAALNHAARVLGLPACSGSVAGALEAWVEAWDA.

Residues 8–12 (RFSPS) and glutamate 44 contribute to the L-glutamate site. Positions 11-21 (PSPTGPLHAGS) match the 'HIGH' region motif. Residues cysteine 100, cysteine 102, tyrosine 126, and cysteine 130 each coordinate Zn(2+). Residues tyrosine 205 and arginine 223 each coordinate L-glutamate. The short motif at 261 to 265 (KLSKQ) is the 'KMSKS' region element. Lysine 264 serves as a coordination point for ATP.

This sequence belongs to the class-I aminoacyl-tRNA synthetase family. GluQ subfamily. Zn(2+) is required as a cofactor.

Functionally, catalyzes the tRNA-independent activation of glutamate in presence of ATP and the subsequent transfer of glutamate onto a tRNA(Asp). Glutamate is transferred on the 2-amino-5-(4,5-dihydroxy-2-cyclopenten-1-yl) moiety of the queuosine in the wobble position of the QUC anticodon. The protein is Glutamyl-Q tRNA(Asp) synthetase of Albidiferax ferrireducens (strain ATCC BAA-621 / DSM 15236 / T118) (Rhodoferax ferrireducens).